The chain runs to 760 residues: MADDGLLLNFSIGDTNIIKPETKLKGGTWRDRLSAKKIAQHRTKNPRKPGEERPSSGKGPQNPNRIQVSSSRPSKRQKTDADGDNEKSRHDNKQHPRQFVSSLFSKNPTPRNAEEEPEQEPVEDAKPTNAPLIDGLDTFTNLGLSPSLAAHLLTKLELKAPTGIQKASMSQLLKEDSDAFIQAETGSGKTLAYLLPLVQRIMTVSNPKNMSTNSKGEPIVHRDSGLFAIVLAPTRELCKQISVVLESLLRCAHWIVAGTVIGGEKKKSEKARLRKGLNILVATPGRLADHLENTQALDVSNVRWLVLDEGDRLMELGFEKELQGIIQKLDARQRPSRIPGIPTKRTTILCSATLKMNVQKLGEISLKDAVHIKADPADEDGETKRKDDDGFRVPAQLKQSYAIVAAKLRLVTLTAYLKRTFMRKGSVMKAIVFVSCADSVDFHFEVFSRRKQYRDESEDEDEEKEDDDEDNSKTKSEASPHGTIAPAVAFSNPSNPVKLHKLHGSLPQHVRTATLNAFSREREPSVLVCTDVASRGLDLPNVDLVIEYDPAFSADDHTHRIGRTARLGRDGRALIFLMPGCEENYVEILKQGYRDGGKALTRTTAEDILKRGFGGNITSETKNWEEKATDWQMDLERWAVDNPQYLEMARRAYQSHIRAYATHIASERSMFNIKELHLGHLAKSFALRDRPSKINVPGLRPGDKEAKKDYKAERNTVGKKRKAGGRDDDFQPSNDATSAAQKMRAKLKEHMAGASEFNLA.

Residues 23–34 (KLKGGTWRDRLS) are compositionally biased toward basic and acidic residues. The segment at 23-129 (KLKGGTWRDR…EPVEDAKPTN (107 aa)) is disordered. Positions 38–47 (IAQHRTKNPR) are enriched in basic residues. A compositionally biased stretch (polar residues) spans 58-72 (KGPQNPNRIQVSSSR). Positions 77–94 (QKTDADGDNEKSRHDNKQ) are enriched in basic and acidic residues. Polar residues predominate over residues 99–110 (FVSSLFSKNPTP). The short motif at 137–166 (DTFTNLGLSPSLAAHLLTKLELKAPTGIQK) is the Q motif element. Positions 170 to 372 (SQLLKEDSDA…EISLKDAVHI (203 aa)) constitute a Helicase ATP-binding domain. An ATP-binding site is contributed by 183 to 190 (AETGSGKT). A DEAD box motif is present at residues 308–311 (DEGD). Positions 396-609 (QLKQSYAIVA…LTRTTAEDIL (214 aa)) constitute a Helicase C-terminal domain. 2 disordered regions span residues 453–490 (YRDE…AVAF) and 692–760 (SKIN…FNLA). Acidic residues predominate over residues 456 to 470 (ESEDEDEEKEDDDED). A compositionally biased stretch (basic and acidic residues) spans 701-716 (PGDKEAKKDYKAERNT). Polar residues predominate over residues 731–740 (QPSNDATSAA).

The protein belongs to the DEAD box helicase family. DDX31/DBP7 subfamily.

It is found in the nucleus. It localises to the nucleolus. The catalysed reaction is ATP + H2O = ADP + phosphate + H(+). In terms of biological role, ATP-binding RNA helicase involved in the biogenesis of 60S ribosomal subunits and is required for the normal formation of 25S and 5.8S rRNAs. The polypeptide is ATP-dependent RNA helicase dbp7 (dbp7) (Aspergillus oryzae (strain ATCC 42149 / RIB 40) (Yellow koji mold)).